The sequence spans 108 residues: uncharacterized protein (108 aa).

The first 21 residues, 1–21, serve as a signal peptide directing secretion; it reads MFRSLFLAAALMAFTPLAANA.

The protein to E.coli YaaX.

This is an uncharacterized protein from Escherichia coli O157:H7.